Here is a 147-residue protein sequence, read N- to C-terminus: Large ribosomal subunit protein uL13 (147 aa).

It belongs to the universal ribosomal protein uL13 family. In terms of assembly, part of the 50S ribosomal subunit.

In terms of biological role, this protein is one of the early assembly proteins of the 50S ribosomal subunit, although it is not seen to bind rRNA by itself. It is important during the early stages of 50S assembly. This is Large ribosomal subunit protein uL13 from Ligilactobacillus salivarius (strain UCC118) (Lactobacillus salivarius).